The sequence spans 389 residues: Nicotinate phosphoribosyltransferase (389 aa).

At H216 the chain carries Phosphohistidine; by autocatalysis.

Belongs to the NAPRTase family. Transiently phosphorylated on a His residue during the reaction cycle. Phosphorylation strongly increases the affinity for substrates and increases the rate of nicotinate D-ribonucleotide production. Dephosphorylation regenerates the low-affinity form of the enzyme, leading to product release.

The enzyme catalyses nicotinate + 5-phospho-alpha-D-ribose 1-diphosphate + ATP + H2O = nicotinate beta-D-ribonucleotide + ADP + phosphate + diphosphate. It participates in cofactor biosynthesis; NAD(+) biosynthesis; nicotinate D-ribonucleotide from nicotinate: step 1/1. Functionally, catalyzes the synthesis of beta-nicotinate D-ribonucleotide from nicotinate and 5-phospho-D-ribose 1-phosphate at the expense of ATP. In Ralstonia pickettii (strain 12J), this protein is Nicotinate phosphoribosyltransferase.